A 344-amino-acid polypeptide reads, in one-letter code: tRNA N6-adenosine threonylcarbamoyltransferase (344 aa).

Residues His-112 and His-116 each coordinate Fe cation. Substrate-binding positions include 135–139 (LVSGG), Asp-168, Gly-181, and Asn-271. Asp-299 is a Fe cation binding site. Positions 323–344 (RARPRWPLDPEAEPVRGAGVKA) are disordered.

Belongs to the KAE1 / TsaD family. The cofactor is Fe(2+).

The protein localises to the cytoplasm. The catalysed reaction is L-threonylcarbamoyladenylate + adenosine(37) in tRNA = N(6)-L-threonylcarbamoyladenosine(37) in tRNA + AMP + H(+). Its function is as follows. Required for the formation of a threonylcarbamoyl group on adenosine at position 37 (t(6)A37) in tRNAs that read codons beginning with adenine. Is involved in the transfer of the threonylcarbamoyl moiety of threonylcarbamoyl-AMP (TC-AMP) to the N6 group of A37, together with TsaE and TsaB. TsaD likely plays a direct catalytic role in this reaction. This is tRNA N6-adenosine threonylcarbamoyltransferase from Erythrobacter litoralis (strain HTCC2594).